Here is an 80-residue protein sequence, read N- to C-terminus: Conotoxin SIVB (80 aa).

The signal sequence occupies residues 1–21 (MGMRMMFTVFLSVVLATTVVS). Residues 22 to 38 (TPSDRASDGRNAAVHER) constitute a propeptide that is removed on maturation. Gln-39 is subject to Pyrrolidone carboxylic acid. An O-linked (HexNAc...) serine glycan is attached at Ser-45. Pro-55, Pro-60, Pro-61, Pro-69, Pro-72, and Pro-75 each carry 4-hydroxyproline. Pro-75 carries the proline amide modification. Residues 76–80 (GRRND) constitute a propeptide that is removed on maturation.

Belongs to the conotoxin A superfamily. Post-translationally, contains 3 disulfide bonds. In terms of processing, O-linked glycan consists of Hex3-HexNAc2 pentasaccharide. In terms of tissue distribution, expressed by the venom duct.

It localises to the secreted. Its function is as follows. Neurotoxin with probable activity on sodium channel. Induces intense repetitive firing of the frog neuromuscular junction, leading to a tetanic contracture in muscle fiber (spastic paralysis). In vivo, shows the same effect as the whole venom when injected on fish prey. The protein is Conotoxin SIVB of Conus striatus (Striated cone).